Consider the following 453-residue polypeptide: MPNIVTRFAPSPTGFLHIGGARTALFNWLYAKHHGGRFLLRIEDTDRKRSTQEAIDAIINGLKWLGVSYDGEIVYQSKRIERHIEVANLLVEKGKAYCCCCPEDKVAEKKAKAREERKIYKHKCTSVIPDAKPVVRFNVPDSQEIIVDDKIYGHIKVNSDQLDDMVILRSDNTPTYIFAVVVDDHDAGITDIIRGSDHLTNTFKQVLIYQALDFDIPRFAHVPLIHGRDGNKLSKRHGATSVCDYEKMGILPKAMRNYLLRLGWSHGNDEIISNEQAVKWFNLESIGRSPARLNFKKLEHLNNHYINNMSNEDILTLMLGESTLTNKKKNYLLQGLTELKKRANYLTELLDLAQFYIKDPPFDLSEEAEQVVKSNLDIIKLLASFLSNIGDKNWNKGFLSSQVKEFSKLHSAKISDIYHSLRAPITGVMDAPGIIDIMIILGKDECIRRLQAV.

The 'HIGH' region motif lies at 10 to 20; it reads PSPTGFLHIGG. The short motif at 232-236 is the 'KMSKS' region element; sequence KLSKR. Residue K235 participates in ATP binding.

It belongs to the class-I aminoacyl-tRNA synthetase family. Glutamate--tRNA ligase type 1 subfamily. As to quaternary structure, monomer.

It localises to the cytoplasm. It catalyses the reaction tRNA(Glu) + L-glutamate + ATP = L-glutamyl-tRNA(Glu) + AMP + diphosphate. In terms of biological role, catalyzes the attachment of glutamate to tRNA(Glu) in a two-step reaction: glutamate is first activated by ATP to form Glu-AMP and then transferred to the acceptor end of tRNA(Glu). The polypeptide is Glutamate--tRNA ligase 2 (Wolbachia sp. subsp. Brugia malayi (strain TRS)).